The primary structure comprises 122 residues: UPF0102 protein CPF_1959 (122 aa).

Belongs to the UPF0102 family.

The chain is UPF0102 protein CPF_1959 from Clostridium perfringens (strain ATCC 13124 / DSM 756 / JCM 1290 / NCIMB 6125 / NCTC 8237 / Type A).